A 341-amino-acid chain; its full sequence is Peroxisomal membrane protein PEX14 (341 aa).

Serine 2 carries the post-translational modification N-acetylserine. Residues 86-94 carry the SH3-binding motif; sequence PPTLPHRDW. Residues 276–341 form a disordered region; it reads MQEESDKEKE…QNGQVEDSIP (66 aa). The span at 279–295 shows a compositional bias: basic and acidic residues; the sequence is ESDKEKENGSDANKDDN. Residues 308–341 show a composition bias toward polar residues; it reads IDSNASIPEWQKNTAANEISVPDWQNGQVEDSIP. The residue at position 313 (serine 313) is a Phosphoserine.

It belongs to the peroxin-14 family. In terms of assembly, interacts with PEX13 (via SH3 domain); forming the PEX13-PEX14 docking complex. Interacts with PEX5 (via WxxxF/Y motifs). Interacts with PEX7. Interacts with PEX9.

It is found in the peroxisome membrane. Component of the PEX13-PEX14 docking complex, a translocon channel that specifically mediates the import of peroxisomal cargo proteins bound to PEX5 or PEX21 receptors. The PEX13-PEX14 docking complex forms a large import pore which can be opened to a diameter of about 9 nm. Mechanistically, PEX5 (or PEX21) receptor along with cargo proteins associates with the PEX14 subunit of the PEX13-PEX14 docking complex in the cytosol, leading to the insertion of the receptor into the organelle membrane with the concomitant translocation of the cargo into the peroxisome matrix. In Saccharomyces cerevisiae (strain ATCC 204508 / S288c) (Baker's yeast), this protein is Peroxisomal membrane protein PEX14.